A 940-amino-acid polypeptide reads, in one-letter code: Acetyl-coenzyme A synthetase (940 aa).

The N-terminal stretch at 1–33 is a signal peptide; that stretch reads MCCAIWSASRAPACSASQLSSSHAVRPSVVPDA. The unknown stretch occupies residues 1–289; the sequence is MCCAIWSASR…VQRSVTRLTA (289 aa). 3 disordered regions span residues 70-127, 157-202, and 224-274; these read TARA…RPRC, VAPP…ADSA, and ASSQ…QQTC. Composition is skewed to polar residues over residues 72-95 and 107-120; these read RATT…TAAS and SSIS…TSGS. 2 stretches are compositionally biased toward low complexity: residues 184–202 and 224–245; these read TAPP…ADSA and ASSQ…SGRS. Polar residues predominate over residues 258 to 274; the sequence is SSPTVQRNQTTVHQQTC. An acetyl-coenzyme A synthetase region spans residues 290–940; that stretch reads MSNPSHAEVP…SVFEAIRASK (651 aa). Residues 480 to 483 and T599 contribute to the CoA site; that span reads RRGK. ATP contacts are provided by residues 675-677, 699-704, D796, and R811; these read GEP and DTWWQT. S819 contacts CoA. Position 822 (R822) interacts with ATP. 3 residues coordinate Mg(2+): V833, H835, and V838. The residue at position 906 (K906) is an N6-acetyllysine.

Belongs to the ATP-dependent AMP-binding enzyme family. Requires Mg(2+) as cofactor. Acetylated on Lys-906 by Pat in the presence of acetyl-CoA as an acetyl donor and ATP. Acetylation results in the inactivation of the enzyme. Deacetylation by the SIR2-homolog deacetylase CobB is required to activate the enzyme.

It carries out the reaction acetate + ATP + CoA = acetyl-CoA + AMP + diphosphate. Its function is as follows. Catalyzes the conversion of acetate into acetyl-CoA (AcCoA), an essential intermediate at the junction of anabolic and catabolic pathways. AcsA undergoes a two-step reaction. In the first half reaction, AcsA combines acetate with ATP to form acetyl-adenylate (AcAMP) intermediate. In the second half reaction, it can then transfer the acetyl group from AcAMP to the sulfhydryl group of CoA, forming the product AcCoA. This is Acetyl-coenzyme A synthetase (acsA) from Mycolicibacterium smegmatis (strain ATCC 700084 / mc(2)155) (Mycobacterium smegmatis).